A 347-amino-acid chain; its full sequence is Aspartate carbamoyltransferase catalytic subunit (347 aa).

Arginine 75 and threonine 76 together coordinate carbamoyl phosphate. Position 103 (lysine 103) interacts with L-aspartate. Residues arginine 125, histidine 153, and glutamine 156 each coordinate carbamoyl phosphate. L-aspartate contacts are provided by arginine 193 and arginine 247. The carbamoyl phosphate site is built by glycine 288 and proline 289.

This sequence belongs to the aspartate/ornithine carbamoyltransferase superfamily. ATCase family. In terms of assembly, heterododecamer (2C3:3R2) of six catalytic PyrB chains organized as two trimers (C3), and six regulatory PyrI chains organized as three dimers (R2).

The catalysed reaction is carbamoyl phosphate + L-aspartate = N-carbamoyl-L-aspartate + phosphate + H(+). The protein operates within pyrimidine metabolism; UMP biosynthesis via de novo pathway; (S)-dihydroorotate from bicarbonate: step 2/3. Functionally, catalyzes the condensation of carbamoyl phosphate and aspartate to form carbamoyl aspartate and inorganic phosphate, the committed step in the de novo pyrimidine nucleotide biosynthesis pathway. The sequence is that of Aspartate carbamoyltransferase catalytic subunit from Erythrobacter litoralis (strain HTCC2594).